The following is a 1701-amino-acid chain: Rho guanine nucleotide exchange factor TIAM2 (1701 aa).

Disordered stretches follow at residues 1-21 (MGNSDSQYTLQGSKNHSNTIT), 201-250 (SPTL…SSWY), 265-293 (GSFLAPGMPDPSLHASFPPGDAKKPFNQS), and 389-417 (SLSRKKRKLQEPRSKEGSDYFDSRSDGLN). A lipid anchor (N-myristoyl glycine) is attached at G2. The span at 238 to 248 (SKGSSLSSESS) shows a compositional bias: low complexity. Positions 397 to 413 (LQEPRSKEGSDYFDSRS) are enriched in basic and acidic residues. Residues 506–620 (VVRKAGWLFF…WVTAVHSACA (115 aa)) form the PH 1 domain. Positions 628 to 695 (GKEDTLRLLK…KFHMDLFRMR (68 aa)) form a coiled coil. The 72-residue stretch at 810–881 (IQTYVHFQDN…YMQQQVYDEI (72 aa)) folds into the RBD domain. The 87-residue stretch at 890 to 976 (DVQLTKTGSV…GLTLIARPPD (87 aa)) folds into the PDZ domain. The disordered stretch occupies residues 1070–1092 (DSQANGMEGPRENQDPPPRSLAR). Positions 1099–1293 (RLRKVIQELV…EKVASHINEM (195 aa)) constitute a DH domain. In terms of domain architecture, PH 2 spans 1347–1478 (DLELTVFVFK…EKTCKDRLVP (132 aa)). Disordered stretches follow at residues 1500-1556 (NSSS…GLAD) and 1568-1628 (LSDE…PKLV). Low complexity predominate over residues 1513 to 1527 (GTLLDSDEGSLSSGT). Residue S1583 is modified to Phosphoserine. Over residues 1596–1607 (RISEDPDVHPEA) the composition is skewed to basic and acidic residues. T1648 bears the Phosphothreonine mark.

It belongs to the TIAM family. In terms of assembly, interacts with MAP1A, MAP1B, PARP1 and YWHAE. Interacts with CD44, PARD3 and MAPK8IP2. In terms of processing, phosphorylated on serine and threonine residues. Phosphorylated on Thr-1648 by Rho-kinase. Its phosphorylation by Rho-kinase inhibits its guanine nucleotide exchange activity, its interaction with MAP1A, MAP1B, PARP1 and YWHAE and reduces its ability to promote neurite growth. As to expression, expressed in the occipital, frontal and temporal lobes, cerebellum, putamen and testis.

It is found in the cytoplasm. Its subcellular location is the cell projection. The protein localises to the lamellipodium. It localises to the filopodium. The protein resides in the growth cone. It is found in the neuron projection. Its subcellular location is the perikaryon. Modulates the activity of RHO-like proteins and connects extracellular signals to cytoskeletal activities. Acts as a GDP-dissociation stimulator protein that stimulates the GDP-GTP exchange activity of RHO-like GTPases and activates them. Mediates extracellular laminin signals to activate Rac1, contributing to neurite growth. Involved in lamellipodial formation and advancement of the growth cone of embryonic hippocampal neurons. Promotes migration of neurons in the cerebral cortex. When overexpressed, induces membrane ruffling accompanied by the accumulation of actin filaments along the altered plasma membrane. Activates specifically RAC1, but not CDC42 and RHOA. This chain is Rho guanine nucleotide exchange factor TIAM2 (TIAM2), found in Homo sapiens (Human).